A 36-amino-acid polypeptide reads, in one-letter code: Turgencin-A (36 aa).

Cystine bridges form between Cys-8–Cys-33, Cys-12–Cys-29, and Cys-17–Cys-26. Met-10 is subject to Methionine sulfoxide. Val-36 bears the Valine amide mark.

The protein localises to the secreted. Functionally, has antimicrobial activity against Gram-positive bacteria (C.glutamicum ATCC 13032 (MIC=0.4 uM), B.subtilis ATCC 23857 (MIC=0.4 uM) and S.aureus ATCC 9144 (MIC=6.3 uM)) and Gram-negative bacteria (E.coli ATCC 25922 (MIC=0.8 uM) and P.aeruginosa ATCC 27853 (MIC=1.6 uM)). This chain is Turgencin-A, found in Synoicum turgens (Colonial ascidian).